Reading from the N-terminus, the 266-residue chain is Putative carbamate hydrolase RutD (266 aa).

It belongs to the AB hydrolase superfamily. Hydrolase RutD family.

It catalyses the reaction carbamate + 2 H(+) = NH4(+) + CO2. Functionally, involved in pyrimidine catabolism. May facilitate the hydrolysis of carbamate, a reaction that can also occur spontaneously. In Escherichia coli O139:H28 (strain E24377A / ETEC), this protein is Putative carbamate hydrolase RutD.